The following is a 552-amino-acid chain: MGRSPEMEVDARSGYCAATRTFRSRRADVPLPADPEVDVVSFLASRRHSGVVALVDAATGRRITFTELWRAVAGAASALAAHPVSLRKGHVALILSPNSVHFPVAALAAMSLGAVLTTANPLNTPAEIAKQVADARPVLAFTTRELLPKLPRAHDLRVVLLESARLPGDSSDPRIVATIEEISATTPDPARRKDRVTQDDPATLLYSSGTTGPSKGVVATHRSLISMVQIIMTRFRLEGSDKTETFLCTVPMFHVYGLVAFATGLLGCGATVVVLSKYELPEMLRSINAYGVTYLPLVPPILVAMVAHPKPLPLGQMRKVLSGGAPLGKELIEGFREKYPQVEILQGYGLTESTAIGASTDSAEESRRYGTAGLLSPNTEAKIVDPDSGEALPVNRTGELWIRGPYVMKGYFKNAEATQSTLTPDGWLKTGDLCYIDEDGYLFVVDRLKELIKYKGYQVPPAELEALLLTHPEVTDVAVIPFPDREVGQFPMAYIVRKKGSNLSEREVMEFVAKQVAPYKKVRKVAFVTDIPKNASGKILRKDLIKLATSKL.

The interval 182–205 (ISATTPDPARRKDRVTQDDPATLL) is disordered. The segment covering 189–198 (PARRKDRVTQ) has biased composition (basic and acidic residues). The ATP site is built by S207, S208, G209, T210, T211, and K215. Position 256 (Y256) interacts with (E)-4-coumaroyl-AMP. K277 is a binding site for CoA. The SBD1 stretch occupies residues 279-346 (ELPEMLRSIN…EKYPQVEILQ (68 aa)). (E)-4-coumaroyl-AMP contacts are provided by G324, Q346, G347, and T351. 5 residues coordinate ATP: Q346, G347, T351, D432, and R447. The tract at residues 347–411 (GYGLTESTAI…IRGPYVMKGY (65 aa)) is SBD2. (E)-4-coumaroyl-AMP-binding residues include K449 and K453. CoA-binding residues include K455 and G456. ATP is bound at residue K538.

Belongs to the ATP-dependent AMP-binding enzyme family. It depends on Mg(2+) as a cofactor.

It carries out the reaction (E)-4-coumarate + ATP + CoA = (E)-4-coumaroyl-CoA + AMP + diphosphate. The enzyme catalyses (E)-4-coumarate + ATP + H(+) = (E)-4-coumaroyl-AMP + diphosphate. The catalysed reaction is (E)-4-coumaroyl-AMP + CoA = (E)-4-coumaroyl-CoA + AMP + H(+). In terms of biological role, carboxylate--CoA ligase that may use 4-coumarate as substrate. Follows a two-step reaction mechanism, wherein the carboxylate substrate first undergoes adenylation by ATP, followed by a thioesterification in the presence of CoA to yield the final CoA thioester. The sequence is that of 4-coumarate--CoA ligase-like 4 (4CLL4) from Oryza sativa subsp. japonica (Rice).